Consider the following 305-residue polypeptide: Ribosomal RNA small subunit methyltransferase H (305 aa).

Residues 46–48, aspartate 65, phenylalanine 92, aspartate 108, and histidine 115 contribute to the S-adenosyl-L-methionine site; that span reads GGH.

Belongs to the methyltransferase superfamily. RsmH family.

Its subcellular location is the cytoplasm. The enzyme catalyses cytidine(1402) in 16S rRNA + S-adenosyl-L-methionine = N(4)-methylcytidine(1402) in 16S rRNA + S-adenosyl-L-homocysteine + H(+). Specifically methylates the N4 position of cytidine in position 1402 (C1402) of 16S rRNA. The chain is Ribosomal RNA small subunit methyltransferase H from Trichormus variabilis (strain ATCC 29413 / PCC 7937) (Anabaena variabilis).